Here is a 397-residue protein sequence, read N- to C-terminus: Serpin B10 (397 aa).

The short motif at 74-77 (KKRK) is the Nuclear localization signal element.

Belongs to the serpin family. Ov-serpin subfamily. As to expression, expressed in many tissues, including brain, heart, kidney, liver, lung, prostate, skin, spleen and stomach.

It localises to the nucleus. The protein localises to the cytoplasm. Functionally, protease inhibitor that may play a role in the regulation of protease activities during hematopoiesis and apoptosis induced by TNF. May regulate protease activities in the cytoplasm and in the nucleus. Inhibits plasmin. The polypeptide is Serpin B10 (Serpinb10) (Rattus norvegicus (Rat)).